Here is a 425-residue protein sequence, read N- to C-terminus: Zinc finger protein 789 (425 aa).

The KRAB domain maps to 11–82 (LSFEDVAMYF…DLPRTGNRKA (72 aa)). C2H2-type zinc fingers lie at residues 201-223 (YECS…QRIH), 229-251 (FECK…KQCH), 257-279 (YRCH…KRIH), 285-307 (YKCS…QVIH), 313-335 (HKCL…QQIH), 341-363 (HKCS…QRIH), 369-391 (FQCG…QVIH), and 397-419 (YQCV…QGTH).

It belongs to the krueppel C2H2-type zinc-finger protein family.

It localises to the nucleus. Functionally, may be involved in transcriptional regulation. The polypeptide is Zinc finger protein 789 (ZNF789) (Homo sapiens (Human)).